The primary structure comprises 299 residues: Pyridoxal 5'-phosphate synthase subunit PdxS (299 aa).

D24 is a binding site for D-ribose 5-phosphate. K81 acts as the Schiff-base intermediate with D-ribose 5-phosphate in catalysis. Position 153 (G153) interacts with D-ribose 5-phosphate. R165 is a binding site for D-glyceraldehyde 3-phosphate. D-ribose 5-phosphate is bound by residues G219 and 240 to 241; that span reads GS.

The protein belongs to the PdxS/SNZ family. In the presence of PdxT, forms a dodecamer of heterodimers.

The catalysed reaction is aldehydo-D-ribose 5-phosphate + D-glyceraldehyde 3-phosphate + L-glutamine = pyridoxal 5'-phosphate + L-glutamate + phosphate + 3 H2O + H(+). It participates in cofactor biosynthesis; pyridoxal 5'-phosphate biosynthesis. Catalyzes the formation of pyridoxal 5'-phosphate from ribose 5-phosphate (RBP), glyceraldehyde 3-phosphate (G3P) and ammonia. The ammonia is provided by the PdxT subunit. Can also use ribulose 5-phosphate and dihydroxyacetone phosphate as substrates, resulting from enzyme-catalyzed isomerization of RBP and G3P, respectively. This chain is Pyridoxal 5'-phosphate synthase subunit PdxS, found in Methanococcus aeolicus (strain ATCC BAA-1280 / DSM 17508 / OCM 812 / Nankai-3).